A 673-amino-acid polypeptide reads, in one-letter code: Mechanosensitive ion channel protein 2, chloroplastic (673 aa).

The transit peptide at 1–75 (MALYGTLQLS…SVPCRTTAFR (75 aa)) directs the protein to the chloroplast. 5 helical membrane passes run 107–127 (FPFV…LWGL), 152–172 (YHVM…LFIC), 193–213 (LNFV…SSLI), 240–260 (ALYS…LGFS), and 264–284 (WLTA…EILT). Residues 492–673 (KINGEDKSKS…QPNSGASTEP (182 aa)) form a disordered region. 3 stretches are compositionally biased toward basic and acidic residues: residues 510-525 (AEQE…KETS), 564-576 (TPKD…TEKP), and 617-642 (GSKR…ELTG). The residue at position 571 (Ser-571) is a Phosphoserine. Residues 661–673 (SQSQPNSGASTEP) show a composition bias toward polar residues.

It belongs to the MscS (TC 1.A.23) family. In terms of tissue distribution, widely expressed.

Its subcellular location is the plastid. The protein localises to the chloroplast membrane. Its function is as follows. Mechanosensitive channel that opens in response to stretch forces in the membrane lipid bilayer. Controls plastid size, shape, and perhaps division during normal plant development by altering ion flux in response to changes in membrane tension. Acts as a component of the chloroplast division machinery. This Arabidopsis thaliana (Mouse-ear cress) protein is Mechanosensitive ion channel protein 2, chloroplastic (MSL2).